A 424-amino-acid chain; its full sequence is Serine--tRNA ligase (424 aa).

229-231 (TAE) serves as a coordination point for L-serine. Residues 260-262 (RKE) and Val-276 contribute to the ATP site. Glu-283 contacts L-serine. 347–350 (ELVS) provides a ligand contact to ATP. Thr-383 provides a ligand contact to L-serine.

Belongs to the class-II aminoacyl-tRNA synthetase family. Type-1 seryl-tRNA synthetase subfamily. In terms of assembly, homodimer. The tRNA molecule binds across the dimer.

The protein localises to the cytoplasm. The catalysed reaction is tRNA(Ser) + L-serine + ATP = L-seryl-tRNA(Ser) + AMP + diphosphate + H(+). The enzyme catalyses tRNA(Sec) + L-serine + ATP = L-seryl-tRNA(Sec) + AMP + diphosphate + H(+). It functions in the pathway aminoacyl-tRNA biosynthesis; selenocysteinyl-tRNA(Sec) biosynthesis; L-seryl-tRNA(Sec) from L-serine and tRNA(Sec): step 1/1. Functionally, catalyzes the attachment of serine to tRNA(Ser). Is also able to aminoacylate tRNA(Sec) with serine, to form the misacylated tRNA L-seryl-tRNA(Sec), which will be further converted into selenocysteinyl-tRNA(Sec). The chain is Serine--tRNA ligase from Methanosphaera stadtmanae (strain ATCC 43021 / DSM 3091 / JCM 11832 / MCB-3).